We begin with the raw amino-acid sequence, 256 residues long: Signal peptidase I (256 aa).

Residues Ser-32 and Lys-75 contribute to the active site.

This sequence belongs to the peptidase S26 family.

It carries out the reaction Cleavage of hydrophobic, N-terminal signal or leader sequences from secreted and periplasmic proteins.. The chain is Signal peptidase I (lepB) from Aquifex aeolicus (strain VF5).